The chain runs to 811 residues: Phenylalanine--tRNA ligase beta subunit (811 aa).

The region spanning A40–D156 is the tRNA-binding domain. The 76-residue stretch at K411–Y486 folds into the B5 domain. Residues D464, D470, E473, and E474 each contribute to the Mg(2+) site. Residues P717–R810 form the FDX-ACB domain.

This sequence belongs to the phenylalanyl-tRNA synthetase beta subunit family. Type 1 subfamily. In terms of assembly, tetramer of two alpha and two beta subunits. Requires Mg(2+) as cofactor.

Its subcellular location is the cytoplasm. The enzyme catalyses tRNA(Phe) + L-phenylalanine + ATP = L-phenylalanyl-tRNA(Phe) + AMP + diphosphate + H(+). The protein is Phenylalanine--tRNA ligase beta subunit of Oceanobacillus iheyensis (strain DSM 14371 / CIP 107618 / JCM 11309 / KCTC 3954 / HTE831).